The primary structure comprises 432 residues: Adenylosuccinate synthetase (432 aa).

Residues 13-19 (GDEGKGK) and 41-43 (GHT) contribute to the GTP site. D14 (proton acceptor) is an active-site residue. Mg(2+)-binding residues include D14 and G41. IMP is bound by residues 14 to 17 (DEGK), 39 to 42 (NAGH), T130, R144, Q225, T240, and R304. H42 functions as the Proton donor in the catalytic mechanism. Residue 300-306 (ATTGRRR) participates in substrate binding. GTP-binding positions include R306, 332–334 (KLD), and 415–417 (STG).

It belongs to the adenylosuccinate synthetase family. In terms of assembly, homodimer. It depends on Mg(2+) as a cofactor.

It is found in the cytoplasm. The enzyme catalyses IMP + L-aspartate + GTP = N(6)-(1,2-dicarboxyethyl)-AMP + GDP + phosphate + 2 H(+). It functions in the pathway purine metabolism; AMP biosynthesis via de novo pathway; AMP from IMP: step 1/2. Plays an important role in the de novo pathway of purine nucleotide biosynthesis. Catalyzes the first committed step in the biosynthesis of AMP from IMP. This is Adenylosuccinate synthetase from Citrobacter koseri (strain ATCC BAA-895 / CDC 4225-83 / SGSC4696).